A 321-amino-acid polypeptide reads, in one-letter code: Major immediate early protein (321 aa).

The segment at 86–139 (CSVCLETYSQQSNDTCPFLIPTTCDHGFCFKCVINLQSNAMNIPHSTVCCPLCN) adopts an RING-type zinc-finger fold. The leucine-zipper stretch occupies residues 228 to 249 (LIEENTRLNEQIQELQHQVRTL).

It localises to the host nucleus. Plays some regulatory role in both viral DNA replication and transcriptional transactivation. The polypeptide is Major immediate early protein (PE38) (Lepidoptera (butterflies and moths)).